The sequence spans 149 residues: Histone H3-like 1 (149 aa).

The span at 1-19 (MARPRKEAPQRNLDRDENA) shows a compositional bias: basic and acidic residues. The tract at residues 1–58 (MARPRKEAPQRNLDRDENARQQPTEEPQDEAPRNQGRQQQQQRPPAAPRRPRRFRPGT) is disordered. Low complexity predominate over residues 33-44 (RNQGRQQQQQRP).

The protein belongs to the histone H3 family. The nucleosome is a histone octamer containing two molecules each of H2A, H2B, H3 and H4 assembled in one H3-H4 heterotetramer and two H2A-H2B heterodimers. The octamer wraps approximately 147 bp of DNA. As to expression, pollen specific.

Its subcellular location is the nucleus. It localises to the chromosome. Core component of nucleosome. Nucleosomes wrap and compact DNA into chromatin, limiting DNA accessibility to the cellular machineries which require DNA as a template. Histones thereby play a central role in transcription regulation, DNA repair, DNA replication and chromosomal stability. DNA accessibility is regulated via a complex set of post-translational modifications of histones, also called histone code, and nucleosome remodeling. This chain is Histone H3-like 1 (gH3), found in Lilium longiflorum (Trumpet lily).